The chain runs to 388 residues: MANSRTVLILCGDYMEDYEVMVPFQALQAFGITVHTVCPGKKAGDSCPTAVHDFCGHQTYFESRGHNFTLNATFDEVDLSKYDGLVIPGGRAPEYLALTASVVELVKEFSRSGKPIASICHGQLILAAADTVNGRKCTAYATVGPSLVAAGAKWVEPITPDVCVVDGSLITAATYEGHPEFIQLFVKALGGKITGANKRILFLCGDYMEDYEVKVPFQSLQALGCQVDAVCPEKKAGDRCPTAIHDFEGDQTYSEKPGHTFALTTNFDDLVSSSYDALVIPGGRAPEYLALNEHVLNIVKEFMNSEKPVASICHGQQILAAAGVLKGRKCTAYPAVKLNVVLGGGTWLEPDPIDRCFTDGNLVTGAAWPGHPEFVSQLMALLGIQVSF.

2 consecutive PfpI endopeptidase domains span residues Arg-5–Gly-190 and Lys-198–Gly-383. Cys-120 acts as the Nucleophile in catalysis. Cys-120 carries the cysteine sulfenic acid (-SOH) modification. The active site involves His-121. Catalysis depends on Cys-313, which acts as the Nucleophile. Cys-313 is modified (cysteine sulfinic acid (-SO2H)). Residue His-314 is part of the active site.

It belongs to the peptidase C56 family. As to quaternary structure, homotrimer. In terms of processing, cys-120 and Cys-313 are oxidized to sulfinic acid.

The catalysed reaction is (R)-S-lactoylglutathione = methylglyoxal + glutathione. Its function is as follows. Possesses glyoxalase I activity. Catalyzes the conversion of hemimercaptal, formed from methylglyoxal and glutathione, to S-lactoylglutathione. May be involved in oxidative stress response. This is Protein DJ-1 homolog D (DJ1D) from Arabidopsis thaliana (Mouse-ear cress).